The sequence spans 162 residues: Universal stress protein MJ0577 (162 aa).

ATP-binding positions include proline 11, valine 41, 127-133 (GSHGKTN), and 141-143 (SVT).

It belongs to the universal stress protein A family. Homodimer. Mn(2+) is required as a cofactor.

It localises to the cytoplasm. In Methanocaldococcus jannaschii (strain ATCC 43067 / DSM 2661 / JAL-1 / JCM 10045 / NBRC 100440) (Methanococcus jannaschii), this protein is Universal stress protein MJ0577.